A 549-amino-acid chain; its full sequence is Dihydroxy-acid dehydratase (549 aa).

Residue Asp-78 participates in Mg(2+) binding. Cys-119 serves as a coordination point for [2Fe-2S] cluster. Mg(2+)-binding residues include Asp-120 and Lys-121. Position 121 is an N6-carboxylysine (Lys-121). Cys-191 is a [2Fe-2S] cluster binding site. Glu-441 is a Mg(2+) binding site. The active-site Proton acceptor is the Ser-466.

It belongs to the IlvD/Edd family. In terms of assembly, homodimer. The cofactor is [2Fe-2S] cluster. Mg(2+) is required as a cofactor.

It carries out the reaction (2R)-2,3-dihydroxy-3-methylbutanoate = 3-methyl-2-oxobutanoate + H2O. The enzyme catalyses (2R,3R)-2,3-dihydroxy-3-methylpentanoate = (S)-3-methyl-2-oxopentanoate + H2O. The protein operates within amino-acid biosynthesis; L-isoleucine biosynthesis; L-isoleucine from 2-oxobutanoate: step 3/4. It participates in amino-acid biosynthesis; L-valine biosynthesis; L-valine from pyruvate: step 3/4. In terms of biological role, functions in the biosynthesis of branched-chain amino acids. Catalyzes the dehydration of (2R,3R)-2,3-dihydroxy-3-methylpentanoate (2,3-dihydroxy-3-methylvalerate) into 2-oxo-3-methylpentanoate (2-oxo-3-methylvalerate) and of (2R)-2,3-dihydroxy-3-methylbutanoate (2,3-dihydroxyisovalerate) into 2-oxo-3-methylbutanoate (2-oxoisovalerate), the penultimate precursor to L-isoleucine and L-valine, respectively. This chain is Dihydroxy-acid dehydratase, found in Methanobrevibacter smithii (strain ATCC 35061 / DSM 861 / OCM 144 / PS).